The primary structure comprises 411 residues: uncharacterized protein (411 aa).

2 disordered regions span residues 1–91 (METP…QDEE) and 253–280 (KGPLARRNEEDENKPQEKRPRAVTAYSP). A compositionally biased stretch (acidic residues) spans 46-57 (ETTESADSENDM). Residues 74 to 86 (SNESFSSNQSTES) show a composition bias toward low complexity. The span at 258 to 272 (RRNEEDENKPQEKRP) shows a compositional bias: basic and acidic residues. A Phosphoserine modification is found at Ser279.

As to expression, widely expressed, highest levels in cerebellum, brain cortex, hippocampus, pons, putamen and amygdala. Highly expressed in neurons, but also present in glial cells. Slightly higher expression in the dorsolateral prefrontal cortex of schizophrenic patients compared to control individuals.

The protein resides in the cytoplasm. This is an uncharacterized protein from Homo sapiens (Human).